A 78-amino-acid chain; its full sequence is Large ribosomal subunit protein bL28 (78 aa).

Positions 1 to 22 (MAKVCQVTGKRPVTGHNVSHAK) are disordered.

The protein belongs to the bacterial ribosomal protein bL28 family.

This chain is Large ribosomal subunit protein bL28, found in Saccharophagus degradans (strain 2-40 / ATCC 43961 / DSM 17024).